We begin with the raw amino-acid sequence, 57 residues long: Somatostatin-2 (57 aa).

The segment at 1-26 (GRSHMVLNSALEGARGGPGGEEIPER) is disordered.

Belongs to the somatostatin family.

The protein localises to the secreted. In terms of biological role, somatostatin inhibits the release of somatotropin. The chain is Somatostatin-2 (sst2) from Piaractus mesopotamicus (Small-scaled pacu).